We begin with the raw amino-acid sequence, 199 residues long: Superoxide dismutase [Fe] (199 aa).

Residues His-28, His-80, Asp-162, and His-166 each coordinate Fe cation.

Belongs to the iron/manganese superoxide dismutase family. As to quaternary structure, homodimer. Fe cation is required as a cofactor.

The protein localises to the cytoplasm. The catalysed reaction is 2 superoxide + 2 H(+) = H2O2 + O2. Destroys superoxide anion radicals which are normally produced within the cells and which are toxic to biological systems. In Leptolyngbya boryana (Plectonema boryanum), this protein is Superoxide dismutase [Fe] (sodB).